Consider the following 167-residue polypeptide: UPF0114 protein in repA1-repA2 intergenic region (167 aa).

3 consecutive transmembrane segments (helical) span residues 15 to 35 (LMFP…LKFF), 53 to 73 (LVLV…LVMV), and 136 to 156 (IMLC…MAYI).

This sequence belongs to the UPF0114 family.

It localises to the cell membrane. The chain is UPF0114 protein in repA1-repA2 intergenic region from Buchnera aphidicola subsp. Diuraphis noxia.